The chain runs to 263 residues: Small ribosomal subunit protein eS4 (263 aa).

The 63-residue stretch at 42 to 104 (LPLVIFLRNR…TNELFRLIYD (63 aa)) folds into the S4 RNA-binding domain.

It belongs to the eukaryotic ribosomal protein eS4 family.

The chain is Small ribosomal subunit protein eS4 (RpS4) from Spodoptera frugiperda (Fall armyworm).